The chain runs to 311 residues: MSYQDLKECKIITAFITPFHEDGSINFDAIPALIEHLLAHHTDGILLAGTTAESPTLTHDEELELFAAVQKVVNGRVPLIAGVGTNDTRDSIEFVKEVAEFGGFAAGLAIVPYYNKPSQEGMYQHFKAIADASDLPIIIYNIPGRVVVELTPETMLRLADHPNIIGVKECTSLANMAYLIEHKPEEFLIYTGEDGDAFHAMNLGADGVISVASHTNGDEMHEMFTAIAESDMKKAAAIQRKFIPKVNALFSYPSPAPVKAILNYMGFEAGPTRLPLVPAPEEDAKRIIKVVVDGDYEATKATVTGVLRPDY.

Residue Thr51 coordinates pyruvate. Catalysis depends on Tyr140, which acts as the Proton donor/acceptor. Lys168 functions as the Schiff-base intermediate with substrate in the catalytic mechanism. Ile209 lines the pyruvate pocket.

It belongs to the DapA family. Homotetramer; dimer of dimers.

It localises to the cytoplasm. It catalyses the reaction L-aspartate 4-semialdehyde + pyruvate = (2S,4S)-4-hydroxy-2,3,4,5-tetrahydrodipicolinate + H2O + H(+). It participates in amino-acid biosynthesis; L-lysine biosynthesis via DAP pathway; (S)-tetrahydrodipicolinate from L-aspartate: step 3/4. Catalyzes the condensation of (S)-aspartate-beta-semialdehyde [(S)-ASA] and pyruvate to 4-hydroxy-tetrahydrodipicolinate (HTPA). This Streptococcus pneumoniae (strain ATCC 700669 / Spain 23F-1) protein is 4-hydroxy-tetrahydrodipicolinate synthase.